The following is a 433-amino-acid chain: Dihydroorotase (433 aa).

Histidine 63 and histidine 65 together coordinate Zn(2+). Substrate is bound by residues 65–67 (HLR) and asparagine 97. The Zn(2+) site is built by aspartate 155, histidine 182, and histidine 235. Asparagine 283 is a binding site for substrate. Aspartate 310 lines the Zn(2+) pocket. Residue aspartate 310 is part of the active site. Histidine 314 is a substrate binding site.

Belongs to the metallo-dependent hydrolases superfamily. DHOase family. Class I DHOase subfamily. It depends on Zn(2+) as a cofactor.

The enzyme catalyses (S)-dihydroorotate + H2O = N-carbamoyl-L-aspartate + H(+). It functions in the pathway pyrimidine metabolism; UMP biosynthesis via de novo pathway; (S)-dihydroorotate from bicarbonate: step 3/3. In terms of biological role, catalyzes the reversible cyclization of carbamoyl aspartate to dihydroorotate. This is Dihydroorotase from Anaeromyxobacter dehalogenans (strain 2CP-1 / ATCC BAA-258).